Here is a 533-residue protein sequence, read N- to C-terminus: V(D)J recombination-activating protein 2 (533 aa).

The tract at residues 358-413 is disordered; the sequence is KGEDGNQVCSQESTDFEDSAPLEDSEELYFGREPHELEDSSEGEGDTYNEEDEEDE. The span at 371–384 shows a compositional bias: acidic residues; sequence TDFEDSAPLEDSEE. A compositionally biased stretch (basic and acidic residues) spans 386-395; sequence YFGREPHELE. Positions 396–413 are enriched in acidic residues; it reads DSSEGEGDTYNEEDEEDE. The PHD-type; atypical zinc finger occupies 419–488; sequence WVKCCLGCQV…KYFCLDHGGL (70 aa). Residues cysteine 422, cysteine 426, cysteine 449, histidine 456, histidine 459, cysteine 462, cysteine 482, and histidine 485 each coordinate Zn(2+). Residues 496-517 are disordered; it reads PRQVLSLKRSPMKPQHRKGPMM. Over residues 505–517 the composition is skewed to basic residues; that stretch reads SPMKPQHRKGPMM.

This sequence belongs to the RAG2 family. In terms of assembly, component of the RAG complex composed of core components rag1 and rag2.

The protein resides in the nucleus. Its function is as follows. Core component of the RAG complex, a multiprotein complex that mediates the DNA cleavage phase during V(D)J recombination. V(D)J recombination assembles a diverse repertoire of immunoglobulin and T-cell receptor genes in developing B and T lymphocytes through rearrangement of different V (variable), in some cases D (diversity), and J (joining) gene segments. DNA cleavage by the RAG complex occurs in 2 steps: a first nick is introduced in the top strand immediately upstream of the heptamer, generating a 3'-hydroxyl group that can attack the phosphodiester bond on the opposite strand in a direct transesterification reaction, thereby creating 4 DNA ends: 2 hairpin coding ends and 2 blunt, 5'-phosphorylated ends. In the RAG complex, rag2 is not the catalytic component but is required for all known catalytic activities mediated by RAG1. It probably acts as a sensor of chromatin state that recruits the RAG complex to H3K4me3. This is V(D)J recombination-activating protein 2 (rag2) from Oncorhynchus mykiss (Rainbow trout).